The chain runs to 419 residues: Gamma-glutamyl phosphate reductase (419 aa).

Belongs to the gamma-glutamyl phosphate reductase family.

Its subcellular location is the cytoplasm. It catalyses the reaction L-glutamate 5-semialdehyde + phosphate + NADP(+) = L-glutamyl 5-phosphate + NADPH + H(+). It functions in the pathway amino-acid biosynthesis; L-proline biosynthesis; L-glutamate 5-semialdehyde from L-glutamate: step 2/2. Catalyzes the NADPH-dependent reduction of L-glutamate 5-phosphate into L-glutamate 5-semialdehyde and phosphate. The product spontaneously undergoes cyclization to form 1-pyrroline-5-carboxylate. This chain is Gamma-glutamyl phosphate reductase, found in Gloeobacter violaceus (strain ATCC 29082 / PCC 7421).